Here is a 1407-residue protein sequence, read N- to C-terminus: MSGIKRTIKETDPDYEDVSVALPNKRHKAIESSARDAAVQKIETIIKEQFALEMKNKEHEIDVIDQRLIEARRMMDKLRACIVANYYASAGLLKVSEGLKTFDPMAFNHPAIKKFLESPSRSSSPTNQRSETPSANHSESDSLSQHNDFLSDKDNNSNVDVEERPPSTGEQRPSRKAGRDTSSISGSHKRELRNADLTGDETSRLFVKKTIVVGNVSKYIPPDKREENDQSTHKWMVYVRGSRREPSINHFVKKVWFFLHPSYKPNDLVEVREPPFHLTRRGWGEFPVRVQVHFKDSQNKRIDIIHNLKLDRTYTGLQTLGAETVVDVELHRHSLGEDSVYPQSSESDVCDAPPPTLTLPAAVKASAVAQSPEPAAAAPVGEGFPETTEAERHSTFYSLPSSLERTPTKVTTAQKVTFSSHGNSAFQPIASSCKIVPQSQVPNPESPGKSFQPITMSCKIVSGSPISTPSPSPLPRTPTSTPVHLKQGTASSGVSNPHVIVDKPGQVIGASTPSTGSPTSKLPVASQASQGTGSPIPKIHGSSFLTSTVKQEESLFASMPPLCPIGSHPKVQSPKAVTGGLGAFTKVIIKQEPGEAPHVSTTGAASQSAFPQYVTVKGGHMIAVSPQKQVISAGEGTTQSPKIAPSKVVGVPVGSALPSTVKQAVAISSGQILVAKASSSVTKAVGPKQVVTQGVAKAIVSGGGGTIVAQPVQTLTKTQVTAAGPQKSGSQGSVMATLQLPATNLANLANLPPGTKLYLTTNSKNPSGKGKLLLIPQGAILRATNNANLQSGSAAAGGSGSSGAGGGSGGGGGSGAGGTPSTSGPGGGPQHLTYTSYILKQTPQGTFLVGQPSPQTPGKQLTTASVVQGTLGVSSSSAQGQQTLKVISGQKTTLFTQAATAGQASLLKLPDNTLKSVPAAPQLAKPGTTMLRVAGGVITAAPSPAVAFSANGAVHQSEGSTPVSSSVGSIIKTPGQPQVCVSQATMATCKGPAAVAGTAASLVSAPSSISGKATVSGLLKVHSAQSSPQQAVLTIPSQLKPLSINTSGGVQTVLMPVNKVVQSFSTSKLPTTVLPISVPNQAAPSSAPVAIAKVKTEPETPGPNCISQENQVAVKTEESSELSNYVIKVDHLETIQQLLTAVVKKIPLITAKGDDASCFSAKSLEQYYGWNIGKRRAAEWQRAMTVRKVLQEILEKNPRFHHLTPLKTKHIAHWCRCHGYTPPDPESLRHDGDSIEDVLTQIDSEPECLSSFSTADDLCRKLEDLQQFQKREPENEEEVDILSLSEPLKTNIKKEQEEKQEEMRFYLPPTPGSGFVGDITQKIGITLQPVALHRNMYASVVEDMILKATEQLVSDILRQALAVGYQTASPNRIPKEITVSNIHQAICNIPFLDFLTNKHMGRLNEDQ.

Lys9 participates in a covalent cross-link: Glycyl lysine isopeptide (Lys-Gly) (interchain with G-Cter in SUMO2). Residues 54-80 are a coiled coil; it reads MKNKEHEIDVIDQRLIEARRMMDKLRA. A Glycyl lysine isopeptide (Lys-Gly) (interchain with G-Cter in SUMO2) cross-link involves residue Lys113. The disordered stretch occupies residues 116–196; sequence LESPSRSSSP…SHKRELRNAD (81 aa). 3 positions are modified to phosphoserine: Ser118, Ser120, and Ser157. A compositionally biased stretch (polar residues) spans 119 to 148; it reads PSRSSSPTNQRSETPSANHSESDSLSQHND. The span at 149–165 shows a compositional bias: basic and acidic residues; it reads FLSDKDNNSNVDVEERP. A Glycyl lysine isopeptide (Lys-Gly) (interchain with G-Cter in SUMO2) cross-link involves residue Lys189. The YEATS domain maps to 201 to 346; the sequence is ETSRLFVKKT…EDSVYPQSSE (146 aa). 2 histone H3K27cr binding regions span residues 260–262 and 283–285; these read HPS and WGE. Thr406 is modified (phosphothreonine). Phosphoserine is present on residues Ser446, Ser462, Ser464, Ser470, and Ser472. The tract at residues 462–540 is disordered; that stretch reads SGSPISTPSP…GTGSPIPKIH (79 aa). Thr477 is modified (phosphothreonine). Residue Lys486 forms a Glycyl lysine isopeptide (Lys-Gly) (interchain with G-Cter in SUMO2) linkage. A compositionally biased stretch (low complexity) spans 511 to 520; the sequence is STPSTGSPTS. The residue at position 534 (Ser534) is a Phosphoserine. Lys550 is covalently cross-linked (Glycyl lysine isopeptide (Lys-Gly) (interchain with G-Cter in SUMO2)). Phosphoserine is present on Ser573. Lys590 is covalently cross-linked (Glycyl lysine isopeptide (Lys-Gly) (interchain with G-Cter in SUMO2)). Ser625 is subject to Phosphoserine. Glycyl lysine isopeptide (Lys-Gly) (interchain with G-Cter in SUMO2) cross-links involve residues Lys647 and Lys771. The segment at 791 to 833 is disordered; sequence SGSAAAGGSGSSGAGGGSGGGGGSGAGGTPSTSGPGGGPQHLT. Residues 795–829 show a composition bias toward gly residues; the sequence is AAGGSGSSGAGGGSGGGGGSGAGGTPSTSGPGGGP. Lys908 is covalently cross-linked (Glycyl lysine isopeptide (Lys-Gly) (interchain with G-Cter in SUMO2)). A Glycyl lysine isopeptide (Lys-Gly) (interchain with G-Cter in SUMO1); alternate cross-link involves residue Lys1095. A Glycyl lysine isopeptide (Lys-Gly) (interchain with G-Cter in SUMO2); alternate cross-link involves residue Lys1095. A Glycyl lysine isopeptide (Lys-Gly) (interchain with G-Cter in SUMO2) cross-link involves residue Lys1115. Thr1204 is modified (phosphothreonine). Glycyl lysine isopeptide (Lys-Gly) (interchain with G-Cter in SUMO2) cross-links involve residues Lys1207 and Lys1270.

Component of the ADA2A-containing complex (ATAC), composed of KAT14, KAT2A, TADA2L, TADA3L, ZZ3, MBIP, WDR5, YEATS2, SGF29 and DR1.

The protein localises to the nucleus. Its function is as follows. Chromatin reader component of the ATAC complex, a complex with histone acetyltransferase activity on histones H3 and H4. YEATS2 specifically recognizes and binds histone H3 crotonylated at 'Lys-27' (H3K27cr). Crotonylation marks active promoters and enhancers and confers resistance to transcriptional repressors. This is YEATS domain-containing protein 2 from Mus musculus (Mouse).